The primary structure comprises 348 residues: MFYLSTFMTIVISLSLVSCSYDCNNPGYSCKGTCHYYGPCICNEKLMGYDCSVLKSRMSTGSNCTVTCQNNGKCYDGSKCLCSSDYTGDLCEKQTTGARCTLDAVVFEAYRPIGFVGETYLSQSRSCKLLETTSDVPGMIKFERKIFHGDTSMCGLKKHMDIPSAGDVTYEADIYSTFQYNSWGTRDFMDNVKCQYKPTRVGLSMDAPDSLFPIKMSARDGASSNVQATTQSAPISLLFSPQNIPDVKGAMVDYLEVYSINSTSKEYKSVVAVKNGCAQKNEYNVAFSNLDELDPATSKWIGLVKMQAFIIFENEPILFNYRLRFCPDRCTTPTCAAPXVGQATSAAV.

An N-terminal signal peptide occupies residues 1–19; that stretch reads MFYLSTFMTIVISLSLVSC. One can recognise an EGF-like domain in the interval 60 to 92; sequence TGSNCTVTCQNNGKCYDGSKCLCSSDYTGDLCE. 3 cysteine pairs are disulfide-bonded: cysteine 64/cysteine 74, cysteine 68/cysteine 80, and cysteine 82/cysteine 91. One can recognise a ZP domain in the interval 99 to 342; the sequence is RCTLDAVVFE…PTCAAPXVGQ (244 aa).

In terms of tissue distribution, prismatic layer of shell (at protein level). Expressed primarily in the mantle with highest level in the mantle edge and lower level in the mantle pallium.

Its subcellular location is the secreted. This chain is EGF-like domain-containing protein 1, found in Pinctada maxima (Silver-lipped pearl oyster).